Here is a 146-residue protein sequence, read N- to C-terminus: uncharacterized protein (146 aa).

The region spanning Met1–Glu137 is the HTH marR-type domain.

This is an uncharacterized protein from Staphylococcus aureus (strain MRSA252).